The chain runs to 182 residues: Ribosome-recycling factor (182 aa).

The segment at 136 to 156 (VKKQEKDGDFSEDQSRDEQDS) is disordered.

This sequence belongs to the RRF family.

The protein resides in the cytoplasm. Functionally, responsible for the release of ribosomes from messenger RNA at the termination of protein biosynthesis. May increase the efficiency of translation by recycling ribosomes from one round of translation to another. The chain is Ribosome-recycling factor from Synechococcus sp. (strain CC9902).